A 228-amino-acid polypeptide reads, in one-letter code: Thermonuclease (228 aa).

The signal sequence occupies residues 1–23 (MTEYLLSAGICMAIVSILLIGMA). A propeptide spanning residues 24–60 (ISNVSKGQYAKRFFFFATSCLVLTLVVVSSLSSSANA) is cleaved from the precursor. Residue D100 participates in Ca(2+) binding. R114 is a catalytic residue. Ca(2+) contacts are provided by D119 and T120. Active-site residues include E122 and R166.

It belongs to the thermonuclease family. Ca(2+) is required as a cofactor.

It localises to the secreted. It catalyses the reaction Endonucleolytic cleavage to nucleoside 3'-phosphates and 3'-phosphooligonucleotide end-products.. Enzyme that catalyzes the hydrolysis of both DNA and RNA at the 5' position of the phosphodiester bond. The protein is Thermonuclease (nuc) of Staphylococcus aureus (strain MSSA476).